A 161-amino-acid polypeptide reads, in one-letter code: uncharacterized protein (161 aa).

A disordered region spans residues 126-161; sequence TPSNCGESSTSSGQSSGDESNCSLRTHGVYTRGEQH. The span at 128–148 shows a compositional bias: low complexity; sequence SNCGESSTSSGQSSGDESNCS.

Belongs to the herpesviridae US1 family.

This is an uncharacterized protein from Human cytomegalovirus (strain AD169) (HHV-5).